The sequence spans 492 residues: Catalase isozyme 3 (492 aa).

Residues His65 and Asn138 contribute to the active site. A heme-binding site is contributed by Tyr348.

The protein belongs to the catalase family. As to quaternary structure, homotetramer. Heme serves as cofactor.

It localises to the peroxisome. The enzyme catalyses 2 H2O2 = O2 + 2 H2O. Occurs in almost all aerobically respiring organisms and serves to protect cells from the toxic effects of hydrogen peroxide. This Nicotiana plumbaginifolia (Leadwort-leaved tobacco) protein is Catalase isozyme 3 (CAT3).